Reading from the N-terminus, the 379-residue chain is Lipid-A-disaccharide synthase (379 aa).

This sequence belongs to the LpxB family.

It catalyses the reaction a lipid X + a UDP-2-N,3-O-bis[(3R)-3-hydroxyacyl]-alpha-D-glucosamine = a lipid A disaccharide + UDP + H(+). Its pathway is bacterial outer membrane biogenesis; LPS lipid A biosynthesis. In terms of biological role, condensation of UDP-2,3-diacylglucosamine and 2,3-diacylglucosamine-1-phosphate to form lipid A disaccharide, a precursor of lipid A, a phosphorylated glycolipid that anchors the lipopolysaccharide to the outer membrane of the cell. The sequence is that of Lipid-A-disaccharide synthase from Vibrio cholerae serotype O1 (strain ATCC 39541 / Classical Ogawa 395 / O395).